A 300-amino-acid polypeptide reads, in one-letter code: Homoserine kinase (300 aa).

82 to 92 (RPGSGLGSSAA) is a binding site for ATP.

This sequence belongs to the GHMP kinase family. Homoserine kinase subfamily.

The protein localises to the cytoplasm. It catalyses the reaction L-homoserine + ATP = O-phospho-L-homoserine + ADP + H(+). It participates in amino-acid biosynthesis; L-threonine biosynthesis; L-threonine from L-aspartate: step 4/5. Its function is as follows. Catalyzes the ATP-dependent phosphorylation of L-homoserine to L-homoserine phosphate. The sequence is that of Homoserine kinase from Methanocella arvoryzae (strain DSM 22066 / NBRC 105507 / MRE50).